A 144-amino-acid polypeptide reads, in one-letter code: DNA-directed RNA polymerases II and V subunit 6B (144 aa).

Positions Met-1–Asp-32 are enriched in acidic residues. A disordered region spans residues Met-1–Ser-62. Residues Thr-46–Gln-56 show a composition bias toward basic and acidic residues.

It belongs to the archaeal Rpo6/eukaryotic RPB6 RNA polymerase subunit family. Component of the RNA polymerase II and V complexes.

Its subcellular location is the nucleus. In terms of biological role, DNA-dependent RNA polymerase catalyzes the transcription of DNA into RNA using the four ribonucleoside triphosphates as substrates. Component of RNA polymerase II which synthesizes mRNA precursors and many functional non-coding RNAs. Pol II is the central component of the basal RNA polymerase II transcription machinery. It is composed of mobile elements that move relative to each other. Component of RNA polymerase V which mediates RNA-directed DNA methylation-dependent (RdDM) transcriptional gene silencing (TGS) of endogenous repeated sequences, including transposable elements. In Arabidopsis thaliana (Mouse-ear cress), this protein is DNA-directed RNA polymerases II and V subunit 6B (NRPB6B).